Here is a 926-residue protein sequence, read N- to C-terminus: Probable Xaa-Pro aminopeptidase PTT_10145 (926 aa).

Aspartate 274, aspartate 285, glutamate 435, and glutamate 476 together coordinate Mn(2+). Disordered regions lie at residues 505–538 (GNPGTTEILNPSPTPPRRMRSENRTPRLRAPGIS), 595–615 (KRDSVPTAPSRPTKAKNLSPV), 668–696 (SSSTQTSPKPMTVPTFESRQKSHTVEEKH), 711–741 (IGQSNRAIGPEERRRKAQSDHHHHSRLKAAT), and 865–926 (MPVL…FLTR). Residues 506 to 515 (NPGTTEILNP) are compositionally biased toward polar residues. 2 stretches are compositionally biased toward basic and acidic residues: residues 685–696 (SRQKSHTVEEKH) and 719–730 (GPEERRRKAQSD). A compositionally biased stretch (polar residues) spans 887–897 (NNATNKRSMID). Over residues 900-915 (PAERRTRPERPERPAR) the composition is skewed to basic and acidic residues.

Belongs to the peptidase M24B family. It depends on Mn(2+) as a cofactor.

The catalysed reaction is Release of any N-terminal amino acid, including proline, that is linked to proline, even from a dipeptide or tripeptide.. Its function is as follows. Catalyzes the removal of a penultimate prolyl residue from the N-termini of peptides. This Pyrenophora teres f. teres (strain 0-1) (Barley net blotch fungus) protein is Probable Xaa-Pro aminopeptidase PTT_10145.